The following is a 157-amino-acid chain: Tuberoinfundibular peptide of 39 residues (157 aa).

The first 25 residues, 1–25 (MALSLPPRPALLFLVLMSVTLMASA), serve as a signal peptide directing secretion. The propeptide occupies 26 to 116 (FPQPQLRPLQ…DWPSRVGHQQ (91 aa)).

It belongs to the parathyroid hormone family.

The protein localises to the secreted. Functionally, plays a role as a potent and selective agonist of pth2r resulting in adenyl cyclase activation and intracellular calcium level elevation. The polypeptide is Tuberoinfundibular peptide of 39 residues (Danio rerio (Zebrafish)).